The chain runs to 940 residues: MEEDAFPKAYDPKGLEEKLYAFWEESTMFTAQAASDKPPYAIIMPPPNVTGILHMGHALVNTLQDVLIRYKRMSGFEVCWVPGTDHAGIATQTVVERHLYSSLGKRRVDFSREEFLEHVWQWKEKSEGVILSQLRQLGCSCDWSRLRFTMEPLANRAVKKAFKILFDKGHIYRGNYLVNWDPVLQTALADDEVEYEEKDGWLYYIRYRVVGSSEHIVVATTRPETLLGDTAIAISPDDERYSHLLGAKVHLPFVDREIPIIADMSVDPLFGTGAVKITPAHDKDDYRTGMHHNLPMINILTPTGEINENGGIFAGLSKEKARESIITALETLGLFVKKEPYKLRVGVSYRSGAVIEPYLSKQWFVSVDSFRDSLREFVASDAIKIFPPEFTKNYLTWVNNLRDWCISRQLWWGHRIPVWYHKSDAHRMLCYDGEGIPEEVAKDPESWEQDPDVLDTWFSSGLWPLTCLGWPDSECGDLEKFYPTAVLVTGHDILFFWVTRMVLLCSAMVGKKPFSDVFLHGLIFGKSYKRYNDLGEWTYITGEEKYAYDMGKALPKGVIAKWEKLSKSKGNVIDPLEMIAKYGADAVRMALCSCANRGEQIDLDYRLFEEYKNFANKIWNGARFIFSHISNLTSQDLARGIDTTLLGLEDYYILDGFNRLLKELHSAYQNYAFDKITTMAYEFFRNNFCSTYIEIIKPTLYGKQRSKEDQLTKQKLLAVLLVNILGVLHPIAPFVTETLFLKLKEVIGEIKEECSDAITAHALAMLRADSYVVAPYPQSIDIVIPEHLHESFALAERLVYTVRNIRGEMQLDSRASLEVFVICPEGVSIETYVPMVCALGGISSIENLTEEPKDRIYSLGVVEGIRLGVFVPVEHIAKEKTRLEKEKTRLENAIESASRLLSSESFRAKANPDLVCAKEEALKNNRIELQSILDKLASFS.

The short motif at 47–57 (PNVTGILHMGH) is the 'HIGH' region element. The short motif at 564–568 (KLSKS) is the 'KMSKS' region element. Residue Lys-567 participates in ATP binding. Residues 873–937 (VEHIAKEKTR…ELQSILDKLA (65 aa)) adopt a coiled-coil conformation.

The protein belongs to the class-I aminoacyl-tRNA synthetase family. ValS type 1 subfamily. As to quaternary structure, monomer.

Its subcellular location is the cytoplasm. It catalyses the reaction tRNA(Val) + L-valine + ATP = L-valyl-tRNA(Val) + AMP + diphosphate. Catalyzes the attachment of valine to tRNA(Val). As ValRS can inadvertently accommodate and process structurally similar amino acids such as threonine, to avoid such errors, it has a 'posttransfer' editing activity that hydrolyzes mischarged Thr-tRNA(Val) in a tRNA-dependent manner. This is Valine--tRNA ligase from Chlamydia abortus (strain DSM 27085 / S26/3) (Chlamydophila abortus).